The following is a 446-amino-acid chain: Exodeoxyribonuclease 7 large subunit (446 aa).

The protein belongs to the XseA family. Heterooligomer composed of large and small subunits.

The protein resides in the cytoplasm. It catalyses the reaction Exonucleolytic cleavage in either 5'- to 3'- or 3'- to 5'-direction to yield nucleoside 5'-phosphates.. Bidirectionally degrades single-stranded DNA into large acid-insoluble oligonucleotides, which are then degraded further into small acid-soluble oligonucleotides. This chain is Exodeoxyribonuclease 7 large subunit, found in Xanthomonas campestris pv. campestris (strain B100).